The sequence spans 225 residues: Sodium-dependent neutral amino acid transporter SLC6A17 (225 aa).

A run of 3 helical transmembrane segments spans residues 1-8 (NVWRFPYL), 16-35 (AYLV…LFFL), and 60-80 (GIGF…NVII). The Extracellular segment spans residues 81–143 (GWSIFYFFKS…NSISESGGLN (63 aa)). Residue N105 is glycosylated (N-linked (GlcNAc...) asparagine). 3 helical membrane-spanning segments follow: residues 144–162 (WKMT…MAVV), 171–188 (VMYF…CFLV), and 224–225 (IF).

The protein belongs to the sodium:neurotransmitter symporter (SNF) (TC 2.A.22) family.

The protein localises to the cytoplasmic vesicle. The protein resides in the secretory vesicle. Its subcellular location is the synaptic vesicle membrane. It localises to the postsynapse. It is found in the presynapse. It carries out the reaction L-proline(in) + Na(+)(in) = L-proline(out) + Na(+)(out). It catalyses the reaction L-leucine(in) + Na(+)(in) = L-leucine(out) + Na(+)(out). The enzyme catalyses glycine(in) + Na(+)(in) = glycine(out) + Na(+)(out). The catalysed reaction is L-alanine(in) + Na(+)(in) = L-alanine(out) + Na(+)(out). It carries out the reaction L-glutamine(in) + Na(+)(in) = L-glutamine(out) + Na(+)(out). Its function is as follows. Synaptic vesicle transporter with apparent selectivity for neutral amino acids. The transport is sodium-coupled but chloride-independent, likely driven by the proton electrochemical gradient generated by vacuolar H(+)-ATPase in an overall electrogenic mechanism. May contribute to the synaptic uptake of neurotransmitter precursors in a process coupled in part to vesicle exocytosis. The sequence is that of Sodium-dependent neutral amino acid transporter SLC6A17 from Bos taurus (Bovine).